The chain runs to 239 residues: LGLMEVHFVAAAWQAVEPSDIAVCFREAGFGGGPNATITTALKSEGEEEEEEEEEEEEEEGEGEEEEEEDGEEEEEAGEGEELGEEEEVEEEGDVDTVEEEEEEEEESSSEGLEAEDWAQGVVEAGGSFGGYGAQEEAQCPTLHFLEGEEDSESDSEEEEEDDDEDEDDEDDEEEDDEVPVPSFGEAMAYFAMVKRYLTSSPIDDRVQSHILHLEHDLVHVTRKNHARQAGARGLGHQS.

A disordered region spans residues 28 to 185 (AGFGGGPNAT…DDEVPVPSFG (158 aa)). Phosphothreonine is present on residues T37 and T39. Composition is skewed to acidic residues over residues 46–117 (GEEE…EAED) and 148–179 (GEEDSESDSEEEEEDDDEDEDDEDDEEEDDEV). Residues 176 to 239 (DDEVPVPSFG…AGARGLGHQS (64 aa)) are homodimerization.

As to quaternary structure, antiparallel homodimer. Interacts with CENPT. Identified in a centromere complex containing histones H2A, H2B and H4, and at least CENPA, CENPB, CENPC, CENPT, CENPN, HJURP, SUPT16H, SSRP1 and RSF1. Post-translationally, poly-ADP-ribosylated by PARP1. In terms of processing, N-terminally methylated by METTL11A/NTM1. Alpha-N-methylation is stimulated in response extracellular stimuli, including increased cell density and heat shock, and seems to facilitate binding to CENP-B boxes. Chromatin-bound CENP-B is primarily trimethylated.

It is found in the nucleus. The protein resides in the chromosome. The protein localises to the centromere. Functionally, interacts with centromeric heterochromatin in chromosomes and binds to a specific 17 bp subset of alphoid satellite DNA, called the CENP-B box. May organize arrays of centromere satellite DNA into a higher-order structure which then directs centromere formation and kinetochore assembly in mammalian chromosomes. This Ovis aries (Sheep) protein is Major centromere autoantigen B (CENPB).